We begin with the raw amino-acid sequence, 298 residues long: ATP phosphoribosyltransferase (298 aa).

It belongs to the ATP phosphoribosyltransferase family. Long subfamily. Mg(2+) serves as cofactor.

It localises to the cytoplasm. The catalysed reaction is 1-(5-phospho-beta-D-ribosyl)-ATP + diphosphate = 5-phospho-alpha-D-ribose 1-diphosphate + ATP. The protein operates within amino-acid biosynthesis; L-histidine biosynthesis; L-histidine from 5-phospho-alpha-D-ribose 1-diphosphate: step 1/9. Its activity is regulated as follows. Feedback inhibited by histidine. Its function is as follows. Catalyzes the condensation of ATP and 5-phosphoribose 1-diphosphate to form N'-(5'-phosphoribosyl)-ATP (PR-ATP). Has a crucial role in the pathway because the rate of histidine biosynthesis seems to be controlled primarily by regulation of HisG enzymatic activity. In Vibrio vulnificus (strain CMCP6), this protein is ATP phosphoribosyltransferase.